Here is a 128-residue protein sequence, read N- to C-terminus: Small ribosomal subunit protein uS11 (128 aa).

It belongs to the universal ribosomal protein uS11 family. As to quaternary structure, part of the 30S ribosomal subunit. Interacts with proteins S7 and S18. Binds to IF-3.

Located on the platform of the 30S subunit, it bridges several disparate RNA helices of the 16S rRNA. Forms part of the Shine-Dalgarno cleft in the 70S ribosome. In Desulforudis audaxviator (strain MP104C), this protein is Small ribosomal subunit protein uS11.